The chain runs to 990 residues: TonB-dependent receptor P26 (990 aa).

The TonB box motif lies at 86–93 (DEVVVIGY). Residues 97 to 213 (RKSDLTGSVS…ANGVVLVTTK (117 aa)) enclose the TBDR plug domain. Positions 220–990 (SSKPEVSANI…TITLGLNVTF (771 aa)) constitute a TBDR beta-barrel domain. A disordered region spans residues 878–902 (TPENPTSDIPRAGGDSVTGTPPNSA). The TonB C-terminal box signature appears at 974–990 (GSYPNPRTITLGLNVTF).

The protein belongs to the TonB-dependent receptor family.

It localises to the cell outer membrane. Functionally, tonB-dependent receptor probably involved in ulvan degradation. Ulvan is the main polysaccharide component of the Ulvales (green seaweed) cell wall. It is composed of disaccharide building blocks comprising 3-sulfated rhamnose (Rha3S) linked to D-glucuronic acid (GlcA), L-iduronic acid (IduA), or D-xylose (Xyl). The TonB-dependent receptor may mediate transport of ulvan oligosaccharides from the surface of the outer membrane to the periplasm for subsequent degradation. The polypeptide is TonB-dependent receptor P26 (Formosa agariphila (strain DSM 15362 / KCTC 12365 / LMG 23005 / KMM 3901 / M-2Alg 35-1)).